Here is a 193-residue protein sequence, read N- to C-terminus: Nucleoside triphosphate pyrophosphatase (193 aa).

Asp-69 functions as the Proton acceptor in the catalytic mechanism.

The protein belongs to the Maf family. Requires a divalent metal cation as cofactor.

Its subcellular location is the cytoplasm. It catalyses the reaction a ribonucleoside 5'-triphosphate + H2O = a ribonucleoside 5'-phosphate + diphosphate + H(+). The catalysed reaction is a 2'-deoxyribonucleoside 5'-triphosphate + H2O = a 2'-deoxyribonucleoside 5'-phosphate + diphosphate + H(+). In terms of biological role, nucleoside triphosphate pyrophosphatase. May have a dual role in cell division arrest and in preventing the incorporation of modified nucleotides into cellular nucleic acids. This Parasynechococcus marenigrum (strain WH8102) protein is Nucleoside triphosphate pyrophosphatase.